Consider the following 179-residue polypeptide: Pyridoxal 5'-phosphate synthase subunit PdxT (179 aa).

48–50 lines the L-glutamine pocket; sequence GES. Residue Cys79 is the Nucleophile of the active site. Residues Arg101 and 127 to 128 each bind L-glutamine; that span reads IR. Residues His163 and Glu165 each act as charge relay system in the active site.

It belongs to the glutaminase PdxT/SNO family. In terms of assembly, in the presence of PdxS, forms a dodecamer of heterodimers. Only shows activity in the heterodimer.

The catalysed reaction is aldehydo-D-ribose 5-phosphate + D-glyceraldehyde 3-phosphate + L-glutamine = pyridoxal 5'-phosphate + L-glutamate + phosphate + 3 H2O + H(+). It catalyses the reaction L-glutamine + H2O = L-glutamate + NH4(+). It participates in cofactor biosynthesis; pyridoxal 5'-phosphate biosynthesis. In terms of biological role, catalyzes the hydrolysis of glutamine to glutamate and ammonia as part of the biosynthesis of pyridoxal 5'-phosphate. The resulting ammonia molecule is channeled to the active site of PdxS. The sequence is that of Pyridoxal 5'-phosphate synthase subunit PdxT from Francisella tularensis subsp. tularensis (strain FSC 198).